Consider the following 438-residue polypeptide: Thymidine phosphorylase (438 aa).

It belongs to the thymidine/pyrimidine-nucleoside phosphorylase family. In terms of assembly, homodimer.

The catalysed reaction is thymidine + phosphate = 2-deoxy-alpha-D-ribose 1-phosphate + thymine. The protein operates within pyrimidine metabolism; dTMP biosynthesis via salvage pathway; dTMP from thymine: step 1/2. Functionally, the enzymes which catalyze the reversible phosphorolysis of pyrimidine nucleosides are involved in the degradation of these compounds and in their utilization as carbon and energy sources, or in the rescue of pyrimidine bases for nucleotide synthesis. This chain is Thymidine phosphorylase, found in Colwellia psychrerythraea (strain 34H / ATCC BAA-681) (Vibrio psychroerythus).